An 89-amino-acid chain; its full sequence is Small ribosomal subunit protein uS15 (89 aa).

Belongs to the universal ribosomal protein uS15 family. As to quaternary structure, part of the 30S ribosomal subunit. Forms a bridge to the 50S subunit in the 70S ribosome, contacting the 23S rRNA.

Its function is as follows. One of the primary rRNA binding proteins, it binds directly to 16S rRNA where it helps nucleate assembly of the platform of the 30S subunit by binding and bridging several RNA helices of the 16S rRNA. In terms of biological role, forms an intersubunit bridge (bridge B4) with the 23S rRNA of the 50S subunit in the ribosome. This Thermus thermophilus (strain ATCC BAA-163 / DSM 7039 / HB27) protein is Small ribosomal subunit protein uS15.